The chain runs to 343 residues: Peroxisome assembly protein 12 (343 aa).

Topologically, residues 1–5 (MDSPS) are peroxisomal matrix. The chain crosses the membrane as a helical span at residues 6–33 (LLEVLQVQQVEKLISPSLRFILAYFTHR). Residues 34–37 (YPRF) lie on the Cytoplasmic side of the membrane. The helical transmembrane segment at 38–62 (LLRAYNSFDGIYLLVKLLLEKSQLK) threads the bilayer. The Peroxisomal matrix segment spans residues 63 to 102 (KWNATSVERRFQLKRVIAVRDSSIIAEEFPQESESATSLN). The chain crosses the membrane as a helical span at residues 103 to 140 (GIDVLKKLFLTYCIPYLLEKCESLTTVKENHTAVSILS). The Cytoplasmic portion of the chain corresponds to 141–146 (LQARDK). Residues 147–193 (QKGALSVFYSKIKILLVRLKKILHFVFRLIRKSNTYLQWLYYLLYAL) form a helical membrane-spanning segment. The Peroxisomal matrix portion of the chain corresponds to 194 to 238 (GKTPYTNLADHILRQRVIYNVENIHSRKLISTREKSSLLTSIADH). Residues 239 to 266 (SMEGFLIIIQLIDWWQSNNYESHLKKGE) traverse the membrane as a helical segment. Residues 267 to 343 (VAFTELAPPK…KGESFWRLMI (77 aa)) are Cytoplasmic-facing. Residues C289, C292, C309, and C312 each coordinate Zn(2+). An RING-type; degenerate zinc finger spans residues 289–328 (CKICGEKIKNPAVLSTGFVFCYPCIQVWLQRHPFKCPVTN).

It belongs to the pex2/pex10/pex12 family. In terms of assembly, component of the PEX2-PEX10-PEX12 retrotranslocation channel, composed of PEX2, PEX10 and PEX12.

Its subcellular location is the peroxisome membrane. It participates in protein modification; protein ubiquitination. In terms of biological role, component of a retrotranslocation channel required for peroxisome organization by mediating export of the PEX5 receptor from peroxisomes to the cytosol, thereby promoting PEX5 recycling. The retrotranslocation channel is composed of PEX2, PEX10 and PEX12; each subunit contributing transmembrane segments that coassemble into an open channel that specifically allows the passage of PEX5 through the peroxisomal membrane. PEX12 also regulates PEX5 recycling by activating the E3 ubiquitin-protein ligase activity of PEX10. When PEX5 recycling is compromised, PEX12 stimulates PEX10-mediated polyubiquitination of PEX5, leading to its subsequent degradation. This is Peroxisome assembly protein 12 (pex12) from Schizosaccharomyces pombe (strain 972 / ATCC 24843) (Fission yeast).